Here is a 90-residue protein sequence, read N- to C-terminus: Probable Fe(2+)-trafficking protein (90 aa).

The protein belongs to the Fe(2+)-trafficking protein family.

Could be a mediator in iron transactions between iron acquisition and iron-requiring processes, such as synthesis and/or repair of Fe-S clusters in biosynthetic enzymes. In Pseudoalteromonas translucida (strain TAC 125), this protein is Probable Fe(2+)-trafficking protein.